A 325-amino-acid polypeptide reads, in one-letter code: Heme A synthase (325 aa).

The next 5 helical transmembrane spans lie at 6–26 (WLAV…FTRL), 88–108 (LVGR…FVVG), 116–136 (LRLC…WYMV), 155–175 (LFCA…PTVI), and 184–204 (LVGC…GLVA). His246 provides a ligand contact to heme. Helical transmembrane passes span 248–268 (MSAF…FFYD), 275–295 (VFLV…TLLF), and 297–317 (IPID…GICV). Position 305 (His305) interacts with heme.

This sequence belongs to the COX15/CtaA family. Type 2 subfamily. Interacts with CtaB. Heme b is required as a cofactor.

It is found in the cell membrane. The enzyme catalyses Fe(II)-heme o + 2 A + H2O = Fe(II)-heme a + 2 AH2. Its pathway is porphyrin-containing compound metabolism; heme A biosynthesis; heme A from heme O: step 1/1. In terms of biological role, catalyzes the conversion of heme O to heme A by two successive hydroxylations of the methyl group at C8. The first hydroxylation forms heme I, the second hydroxylation results in an unstable dihydroxymethyl group, which spontaneously dehydrates, resulting in the formyl group of heme A. The sequence is that of Heme A synthase from Neorickettsia sennetsu (strain ATCC VR-367 / Miyayama) (Ehrlichia sennetsu).